Here is a 215-residue protein sequence, read N- to C-terminus: Cytochrome c biogenesis ATP-binding export protein CcmA (215 aa).

The ABC transporter domain occupies 3 to 215 (LEAENLAGER…MAAFSVEDIA (213 aa)). 35–42 (GPNGSGKS) is a binding site for ATP.

This sequence belongs to the ABC transporter superfamily. CcmA exporter (TC 3.A.1.107) family. The complex is composed of two ATP-binding proteins (CcmA) and two transmembrane proteins (CcmB).

It is found in the cell inner membrane. The catalysed reaction is heme b(in) + ATP + H2O = heme b(out) + ADP + phosphate + H(+). Part of the ABC transporter complex CcmAB involved in the biogenesis of c-type cytochromes; once thought to export heme, this seems not to be the case, but its exact role is uncertain. Responsible for energy coupling to the transport system. The chain is Cytochrome c biogenesis ATP-binding export protein CcmA from Brucella abortus (strain 2308).